Consider the following 244-residue polypeptide: Precorrin-6A reductase (244 aa).

It belongs to the precorrin-6x reductase family.

It carries out the reaction precorrin-6B + NADP(+) = precorrin-6A + NADPH + 2 H(+). It participates in cofactor biosynthesis; adenosylcobalamin biosynthesis; cob(II)yrinate a,c-diamide from precorrin-2 (aerobic route): step 6/10. Functionally, catalyzes the reduction of the macrocycle of precorrin-6X into precorrin-6Y. This Mycobacterium tuberculosis (strain CDC 1551 / Oshkosh) protein is Precorrin-6A reductase (cobK).